The following is a 552-amino-acid chain: FERRY endosomal RAB5 effector complex subunit 3 (552 aa).

Ser79 carries the post-translational modification Phosphoserine.

Component of the FERRY complex composed of five subunits, TBCK, PPP1R21, FERRY3, CRYZL1 and GATD1 with a ratio of 1:2:1:2:4, respectively.

It localises to the cytoplasm. The protein localises to the early endosome. Functionally, component of the FERRY complex (Five-subunit Endosomal Rab5 and RNA/ribosome intermediary). The FERRY complex directly interacts with mRNAs and RAB5A, and functions as a RAB5A effector involved in the localization and the distribution of specific mRNAs most likely by mediating their endosomal transport. The complex recruits mRNAs and ribosomes to early endosomes through direct mRNA-interaction. Plays a role in mast cell degranulation. This Rattus norvegicus (Rat) protein is FERRY endosomal RAB5 effector complex subunit 3.